Reading from the N-terminus, the 109-residue chain is Phosphoribosyl-AMP cyclohydrolase (109 aa).

Asp-80 contributes to the Mg(2+) binding site. Cys-81 serves as a coordination point for Zn(2+). Residues Asp-82 and Asp-84 each coordinate Mg(2+). Zn(2+) contacts are provided by Cys-97 and Cys-104.

This sequence belongs to the PRA-CH family. Homodimer. Mg(2+) is required as a cofactor. The cofactor is Zn(2+).

It localises to the cytoplasm. The catalysed reaction is 1-(5-phospho-beta-D-ribosyl)-5'-AMP + H2O = 1-(5-phospho-beta-D-ribosyl)-5-[(5-phospho-beta-D-ribosylamino)methylideneamino]imidazole-4-carboxamide. It participates in amino-acid biosynthesis; L-histidine biosynthesis; L-histidine from 5-phospho-alpha-D-ribose 1-diphosphate: step 3/9. Functionally, catalyzes the hydrolysis of the adenine ring of phosphoribosyl-AMP. In Clostridium botulinum (strain Alaska E43 / Type E3), this protein is Phosphoribosyl-AMP cyclohydrolase.